A 510-amino-acid chain; its full sequence is Pre-glycoprotein polyprotein GP complex (510 aa).

Glycine 2 carries the N-myristoyl glycine; by host lipid modification. The Extracellular segment spans residues 2–17 (GQFITLMQSIPEALNM). Residues 18-32 (AFNVALVIVSLLCVT) traverse the membrane as a helical segment. Residue lysine 33 is a topological domain, cytoplasmic. The chain crosses the membrane as a helical span at residues 34–53 (GLINLWKCGIIQLLMFLALA). Extracellular loops occupy residues 54–58 (GRSCD) and 59–448 (GEYK…ALAD). Cysteine 57 contributes to the Zn(2+) binding site. N-linked (GlcNAc...) asparagine; by host glycosylation is found at asparagine 75, asparagine 90, asparagine 101, asparagine 112, asparagine 117, asparagine 122, asparagine 133, asparagine 182, asparagine 218, and asparagine 243. 4 disulfides stabilise this stretch: cysteine 87/cysteine 250, cysteine 295/cysteine 308, cysteine 317/cysteine 326, and cysteine 380/cysteine 401. 4 N-linked (GlcNAc...) asparagine; by host glycosylation sites follow: asparagine 381, asparagine 389, asparagine 406, and asparagine 411. The helical transmembrane segment at 449–469 (LCFWSLVFFTTTVFFQLIGIP) threads the bilayer. Residues 470 to 510 (THRHLIGEGCPKPHRLTSNSLCSCGFYKIPKKPFRWVRKGK) are Cytoplasmic-facing. Residues histidine 471, histidine 473, cysteine 479, histidine 483, cysteine 491, and cysteine 493 each coordinate Zn(2+).

This sequence belongs to the arenaviridae GPC protein family. In terms of assembly, homotetramer; disulfide-linked. As to quaternary structure, homotetramer. GP2 homotetramers bind through ionic interactions with GP1 homotetramers to form the GP complex together with the stable signal peptide. The GP-C polyprotein interacts with the host protease MBTPS1/SKI-1 resulting in the polyprotein processing. In terms of processing, specific enzymatic cleavages in vivo yield mature proteins. GP-C polyprotein is cleaved in the endoplasmic reticulum by the host protease MBTPS1. Only cleaved glycoprotein is incorporated into virions. The SSP remains stably associated with the GP complex following cleavage by signal peptidase and plays crucial roles in the trafficking of GP through the secretory pathway. Post-translationally, myristoylation is necessary for GP2-mediated fusion activity.

Its subcellular location is the virion membrane. The protein localises to the host endoplasmic reticulum membrane. The protein resides in the host Golgi apparatus membrane. It is found in the host cell membrane. Class I viral fusion protein that directs fusion of viral and host endosomal membranes, leading to delivery of the nucleocapsid into the cytoplasm. Membrane fusion is mediated by irreversible conformational changes induced upon acidification in the endosome. Functionally, stable signal peptide (SSP): cleaved and functions as a signal peptide. In addition, it is also retained as the third component of the GP complex. The SSP is required for efficient glycoprotein expression, post-translational maturation cleavage of GP1 and GP2, glycoprotein transport to the cell surface plasma membrane, formation of infectious virus particles, and acid pH-dependent glycoprotein-mediated cell fusion. In terms of biological role, interacts with the host receptor. This Pirital mammarenavirus (isolate Rat/Venezuela/VAV-488/1995) (PIRV) protein is Pre-glycoprotein polyprotein GP complex.